The following is a 228-amino-acid chain: Lipoprotein-releasing system ATP-binding protein LolD (228 aa).

An ABC transporter domain is found at 7-228 (LNCQNLTKDY…MQDGVLRPEM (222 aa)). 43-50 (GSSGSGKS) contributes to the ATP binding site.

The protein belongs to the ABC transporter superfamily. Lipoprotein translocase (TC 3.A.1.125) family. The complex is composed of two ATP-binding proteins (LolD) and two transmembrane proteins (LolC and LolE).

Its subcellular location is the cell inner membrane. Functionally, part of the ABC transporter complex LolCDE involved in the translocation of mature outer membrane-directed lipoproteins, from the inner membrane to the periplasmic chaperone, LolA. Responsible for the formation of the LolA-lipoprotein complex in an ATP-dependent manner. The protein is Lipoprotein-releasing system ATP-binding protein LolD of Mannheimia succiniciproducens (strain KCTC 0769BP / MBEL55E).